Reading from the N-terminus, the 914-residue chain is Thyroid peroxidase (914 aa).

The N-terminal stretch at 1 to 31 (MRTLGAMAIMLVVMGTVIFLSFILRSRDILC) is a signal peptide. The Extracellular segment spans residues 32–834 (GKTMKSHVIS…TCIDSGRLPR (803 aa)). Asparagine 123 carries an N-linked (GlcNAc...) asparagine glycan. Cysteine 136 and cysteine 152 are oxidised to a cystine. Residue aspartate 232 coordinates heme b. Histidine 233 serves as the catalytic Proton acceptor. Aspartate 234 is a Ca(2+) binding site. 2 disulfides stabilise this stretch: cysteine 253-cysteine 263 and cysteine 257-cysteine 278. Asparagine 271 and asparagine 299 each carry an N-linked (GlcNAc...) asparagine glycan. Residues threonine 313, phenylalanine 315, aspartate 317, and serine 319 each contribute to the Ca(2+) site. Asparagine 334 carries an N-linked (GlcNAc...) asparagine glycan. 2 residues coordinate heme b: glutamate 387 and histidine 482. Disulfide bonds link cysteine 586-cysteine 643, cysteine 684-cysteine 709, cysteine 730-cysteine 770, cysteine 756-cysteine 782, cysteine 788-cysteine 802, cysteine 796-cysteine 811, and cysteine 813-cysteine 826. Asparagine 603 carries N-linked (GlcNAc...) asparagine glycosylation. In terms of domain architecture, Sushi spans 728-783 (DKCVFPEEVDNGNFVHCEESGKLVLVYSCFHGYKLQGQEQVTCTQKGWDSEPPVCK). The 44-residue stretch at 784–827 (DVNECADLTHPPCHPSAQCKNTKGSFQCVCTDPYVLGEDEKTCI) folds into the EGF-like; calcium-binding domain. A helical transmembrane segment spans residues 835-859 (ASWVSIALGALLIGGLASLTWIVIC). Topologically, residues 860–914 (RWTHADKKATLPITERVTTQSGCRKSQGRGISPHKAAAQDTGQEPASGSRVLLCE) are cytoplasmic. Residues 881-909 (GCRKSQGRGISPHKAAAQDTGQEPASGSR) form a disordered region.

Belongs to the peroxidase family. XPO subfamily. In terms of assembly, interacts with DUOX1, DUOX2 and CYBA. Ca(2+) is required as a cofactor. Requires heme b as cofactor. In terms of processing, heme is covalently bound through a H(2)O(2)-dependent autocatalytic process. Heme insertion is important for the delivery of protein at the cell surface. Cleaved in its N-terminal part.

It localises to the membrane. The enzyme catalyses 2 iodide + H2O2 + 2 H(+) = diiodine + 2 H2O. The catalysed reaction is [thyroglobulin]-L-tyrosine + iodide + H2O2 + H(+) = [thyroglobulin]-3-iodo-L-tyrosine + 2 H2O. It catalyses the reaction [thyroglobulin]-3-iodo-L-tyrosine + iodide + H2O2 + H(+) = [thyroglobulin]-3,5-diiodo-L-tyrosine + 2 H2O. It carries out the reaction 2 [thyroglobulin]-3,5-diiodo-L-tyrosine + H2O2 = [thyroglobulin]-L-thyroxine + [thyroglobulin]-dehydroalanine + 2 H2O. The enzyme catalyses [thyroglobulin]-3-iodo-L-tyrosine + [thyroglobulin]-3,5-diiodo-L-tyrosine + H2O2 = [thyroglobulin]-3,3',5-triiodo-L-thyronine + [thyroglobulin]-dehydroalanine + 2 H2O. It functions in the pathway hormone biosynthesis; thyroid hormone biosynthesis. Its function is as follows. Iodination and coupling of the hormonogenic tyrosines in thyroglobulin to yield the thyroid hormones T(3) and T(4). This is Thyroid peroxidase (Tpo) from Mus musculus (Mouse).